The primary structure comprises 486 residues: Membrane-bound lytic murein transglycosylase F (486 aa).

Residues 1 to 21 (MTRIKLSYFTIGLVALLLALA) form the signal peptide. Residues 22–268 (LWPNIPWRNG…RLEEKYLGHV (247 aa)) form a non-LT domain region. An LT domain region spans residues 269–486 (GSFDYVDTKT…VVGPGWSIGD (218 aa)). The active site involves glutamate 313.

The protein in the N-terminal section; belongs to the bacterial solute-binding protein 3 family. In the C-terminal section; belongs to the transglycosylase Slt family.

The protein localises to the cell outer membrane. The enzyme catalyses Exolytic cleavage of the (1-&gt;4)-beta-glycosidic linkage between N-acetylmuramic acid (MurNAc) and N-acetylglucosamine (GlcNAc) residues in peptidoglycan, from either the reducing or the non-reducing ends of the peptidoglycan chains, with concomitant formation of a 1,6-anhydrobond in the MurNAc residue.. Functionally, murein-degrading enzyme that degrades murein glycan strands and insoluble, high-molecular weight murein sacculi, with the concomitant formation of a 1,6-anhydromuramoyl product. Lytic transglycosylases (LTs) play an integral role in the metabolism of the peptidoglycan (PG) sacculus. Their lytic action creates space within the PG sacculus to allow for its expansion as well as for the insertion of various structures such as secretion systems and flagella. The chain is Membrane-bound lytic murein transglycosylase F from Yersinia pseudotuberculosis serotype I (strain IP32953).